A 435-amino-acid polypeptide reads, in one-letter code: Elongation factor 1-alpha (435 aa).

The tr-type G domain maps to 4 to 229; sequence KPHLNLIVIG…DMLEIPPKPV (226 aa). Residues 13-20 form a G1 region; the sequence is GHVDHGKS. 13-20 serves as a coordination point for GTP; it reads GHVDHGKS. Ser20 contacts Mg(2+). Residues 69 to 73 are G2; the sequence is GVTIN. Residues 90 to 93 are G3; the sequence is DAPG. GTP contacts are provided by residues 90–94 and 152–155; these read DAPGH and TKMD. The segment at 152 to 155 is G4; it reads TKMD. Residues 193-195 are G5; the sequence is VSI.

Belongs to the TRAFAC class translation factor GTPase superfamily. Classic translation factor GTPase family. EF-Tu/EF-1A subfamily.

The protein localises to the cytoplasm. The enzyme catalyses GTP + H2O = GDP + phosphate + H(+). Its function is as follows. GTP hydrolase that promotes the GTP-dependent binding of aminoacyl-tRNA to the A-site of ribosomes during protein biosynthesis. The chain is Elongation factor 1-alpha from Metallosphaera sedula (strain ATCC 51363 / DSM 5348 / JCM 9185 / NBRC 15509 / TH2).